Reading from the N-terminus, the 384-residue chain is Acetylornithine aminotransferase (384 aa).

Pyridoxal 5'-phosphate is bound by residues 94 to 95 (GT) and Phe-121. Arg-124 is a N(2)-acetyl-L-ornithine binding site. 206-209 (DEVQ) is a pyridoxal 5'-phosphate binding site. Position 235 is an N6-(pyridoxal phosphate)lysine (Lys-235). Ser-263 contributes to the N(2)-acetyl-L-ornithine binding site. Thr-264 lines the pyridoxal 5'-phosphate pocket.

It belongs to the class-III pyridoxal-phosphate-dependent aminotransferase family. ArgD subfamily. As to quaternary structure, homodimer. Pyridoxal 5'-phosphate is required as a cofactor.

Its subcellular location is the cytoplasm. It carries out the reaction N(2)-acetyl-L-ornithine + 2-oxoglutarate = N-acetyl-L-glutamate 5-semialdehyde + L-glutamate. The protein operates within amino-acid biosynthesis; L-arginine biosynthesis; N(2)-acetyl-L-ornithine from L-glutamate: step 4/4. The protein is Acetylornithine aminotransferase of Listeria innocua serovar 6a (strain ATCC BAA-680 / CLIP 11262).